The chain runs to 256 residues: 1-(5-phosphoribosyl)-5-[(5-phosphoribosylamino)methylideneamino] imidazole-4-carboxamide isomerase (256 aa).

The active-site Proton acceptor is Asp-8. The active-site Proton donor is the Asp-129.

It belongs to the HisA/HisF family.

The protein resides in the cytoplasm. It carries out the reaction 1-(5-phospho-beta-D-ribosyl)-5-[(5-phospho-beta-D-ribosylamino)methylideneamino]imidazole-4-carboxamide = 5-[(5-phospho-1-deoxy-D-ribulos-1-ylimino)methylamino]-1-(5-phospho-beta-D-ribosyl)imidazole-4-carboxamide. It participates in amino-acid biosynthesis; L-histidine biosynthesis; L-histidine from 5-phospho-alpha-D-ribose 1-diphosphate: step 4/9. This is 1-(5-phosphoribosyl)-5-[(5-phosphoribosylamino)methylideneamino] imidazole-4-carboxamide isomerase from Syntrophobacter fumaroxidans (strain DSM 10017 / MPOB).